An 841-amino-acid polypeptide reads, in one-letter code: MAAPILKDVVAYVEVWSSNGTENYSKTFTTQLVDMGAKVSKTFNKQVTHVIFKDGYQSTWDKAQKRGVKLVSVLWVEKCRTAGAHIDESLFPAANTNEHLPSLIKKKRKCMQPKDFNFKTPENDKRFQKKFEKMANELQRQKTSLDGDVPILLFESNGSLTYSPIIKINSSHHSAMEKRLQEMKEKRENLSPTSSQMIQQSHDNPSNSLCEAPLNISHDTLCSDESIAGLHSSFDDLCGYSGCGNQERKLGGSINDTKSAMCVSSLVLKTNHIHSSPSFAHLDKSSPQKFLSNLSKEEINLPRNIVGKIVTPDQKQAAGTSQETFEEKYRLSPTFSSTKGHLLIHSRPRSSSVKRKRVSYGFHSPPKEKCKRKRSIRRSIMPRLQLCSSEGSRQHMAGPALEALSCAESSYDDYFSPDNLKERNSENLPPESQLPSSPAQFSCRSLSKKERTSMFEMSDFSCIGKKTRTVDMTSFTAKTISSPQKTANGEGRATLSGVTSEESSAPEETLRCCRQAGPQQKEGACPEGNGFSYTIEDPALPKGHDGDLTPLEGILEEVKEAVGLKSTQDKGTTSKISNSSEGEASSEHEPRSVVDCNVERSAEEKENLLGGYSGSVKNRPTRHDVLDGSCDSFKDLIKPHEELKKSGKGKKPTRTLVMTSMPSEKQNIVIQVVDKLKGFSIAPDVCETTTHVLSGKPLRTLNVLLGIARGCWVLSYDWVLWSLESGHWISEESFELSNHFPAAPLCRRECHLSAGPYRGTLFADQPVMFVSPASSPPVAKLCELVHLCGGRVSQVPRQASIVIGPYSGKKKATVKYLSEKWVLDSITQHKVCASENYLLPQ.

A BRCT 1 domain is found at 1-93 (MAAPILKDVV…AHIDESLFPA (93 aa)). Phosphoserine occurs at positions 278, 286, 295, and 332. Threonine 334 carries the post-translational modification Phosphothreonine. Disordered stretches follow at residues 340–375 (GHLL…RKRS), 417–445 (PDNL…SCRS), 481–507 (SSPQ…SAPE), and 562–593 (VGLK…PRSV). Basic residues predominate over residues 342-358 (LLIHSRPRSSSVKRKRV). The span at 433–445 (QLPSSPAQFSCRS) shows a compositional bias: polar residues. Positions 565–583 (KSTQDKGTTSKISNSSEGE) are enriched in polar residues. BRCT domains lie at 646 to 736 (SGKG…SFEL) and 757 to 839 (YRGT…NYLL).

As to quaternary structure, interacts with CDC27 and maybe other components of the APC/C complex. Interacts with histone variant H2AX under DNA damage conditions.

Its subcellular location is the cytoplasm. The protein localises to the cytoskeleton. The protein resides in the microtubule organizing center. It is found in the centrosome. In terms of biological role, implicated in chromosome condensation and DNA damage induced cellular responses. May play a role in neurogenesis and regulation of the size of the cerebral cortex. This Colobus guereza (Mantled guereza) protein is Microcephalin.